A 376-amino-acid chain; its full sequence is uncharacterized protein (376 aa).

The protein belongs to the YCR102c/YLR460c/YNL134c family.

This is an uncharacterized protein from Saccharomyces cerevisiae (strain ATCC 204508 / S288c) (Baker's yeast).